The following is a 250-amino-acid chain: Methionine aminopeptidase (250 aa).

Histidine 77 serves as a coordination point for substrate. A divalent metal cation is bound by residues aspartate 94, aspartate 105, and histidine 169. Residue histidine 176 coordinates substrate. A divalent metal cation contacts are provided by glutamate 202 and glutamate 235.

This sequence belongs to the peptidase M24A family. Methionine aminopeptidase type 1 subfamily. Monomer. The cofactor is Co(2+). Zn(2+) serves as cofactor. Requires Mn(2+) as cofactor. It depends on Fe(2+) as a cofactor.

The catalysed reaction is Release of N-terminal amino acids, preferentially methionine, from peptides and arylamides.. In terms of biological role, removes the N-terminal methionine from nascent proteins. The N-terminal methionine is often cleaved when the second residue in the primary sequence is small and uncharged (Met-Ala-, Cys, Gly, Pro, Ser, Thr, or Val). Requires deformylation of the N(alpha)-formylated initiator methionine before it can be hydrolyzed. The chain is Methionine aminopeptidase from Mycoplasmoides gallisepticum (strain R(low / passage 15 / clone 2)) (Mycoplasma gallisepticum).